The sequence spans 281 residues: CMT1A duplicated region transcript 15 protein-like protein (281 aa).

2 disordered regions span residues 107–131 (KPAW…DQPS) and 150–187 (AENV…HGGG). Residues 108–120 (PAWEEPPPERALE) are compositionally biased toward basic and acidic residues. The segment covering 165-178 (STAPASRSHAAPSP) has biased composition (low complexity). A helical transmembrane segment spans residues 207-227 (AGTTALLLQGLFIVLILVGYI).

Its subcellular location is the membrane. This is CMT1A duplicated region transcript 15 protein-like protein (CDRT15L2) from Homo sapiens (Human).